Consider the following 182-residue polypeptide: Thioredoxin F-type, chloroplastic (182 aa).

A chloroplast-targeting transit peptide spans 1 to 69; the sequence is MALNLCTSPK…SVRSSLETAG (69 aa). The Thioredoxin domain maps to 70 to 181; sequence PTVTVGKVTE…LVAAIDTVRS (112 aa). Active-site nucleophile residues include cysteine 106 and cysteine 109. Cysteine 106 and cysteine 109 form a disulfide bridge.

This sequence belongs to the thioredoxin family. Plant F-type subfamily. In terms of assembly, forms a complex with heterodimeric ferredoxin-thioredoxin reductase (FTR) and ferredoxin.

It is found in the plastid. Its subcellular location is the chloroplast. Participates in various redox reactions through the reversible oxidation of the active center dithiol to a disulfide. The F form is known to activate a number of enzymes of the photosynthetic carbon cycle. The chain is Thioredoxin F-type, chloroplastic from Pisum sativum (Garden pea).